Here is a 124-residue protein sequence, read N- to C-terminus: Holo-[acyl-carrier-protein] synthase (124 aa).

Residues Asp8 and Glu56 each contribute to the Mg(2+) site.

It belongs to the P-Pant transferase superfamily. AcpS family. Requires Mg(2+) as cofactor.

The protein localises to the cytoplasm. The catalysed reaction is apo-[ACP] + CoA = holo-[ACP] + adenosine 3',5'-bisphosphate + H(+). Its function is as follows. Transfers the 4'-phosphopantetheine moiety from coenzyme A to a Ser of acyl-carrier-protein. This chain is Holo-[acyl-carrier-protein] synthase, found in Maridesulfovibrio salexigens (strain ATCC 14822 / DSM 2638 / NCIMB 8403 / VKM B-1763) (Desulfovibrio salexigens).